The chain runs to 504 residues: 26S proteasome non-ATPase regulatory subunit 3 (504 aa).

The PCI domain occupies 254-434; that stretch reads ARYFYYQGRI…GYLQSRENID (181 aa). Residues 485-504 are disordered; that stretch reads KEEMERQAEESSDNEGDSDF. Acidic residues predominate over residues 494 to 504; that stretch reads ESSDNEGDSDF.

The protein belongs to the proteasome subunit S3 family. The 26S proteasome is composed of a core protease, known as the 20S proteasome, capped at one or both ends by the 19S regulatory complex (RC). The RC is composed of at least 18 different subunits in two subcomplexes, the base and the lid, which form the portions proximal and distal to the 20S proteolytic core, respectively.

Acts as a regulatory subunit of the 26 proteasome which is involved in the ATP-dependent degradation of ubiquitinated proteins. The protein is 26S proteasome non-ATPase regulatory subunit 3 (psmD3) of Dictyostelium discoideum (Social amoeba).